We begin with the raw amino-acid sequence, 53 residues long: Snake venom serine protease LmrSP-4 (53 aa).

Cysteine 26 and cysteine 42 are oxidised to a cystine. Histidine 41 serves as the catalytic Charge relay system.

Monomer. Post-translationally, N-glycosylated. In terms of tissue distribution, expressed by the venom gland.

The protein resides in the secreted. Inhibited by the small molecule serine protease inhibitors phenylmethylsulfonyl fluoride (PMSF) and benzamidine. Functionally, snake venom serine protease that has fibrinogenolytic activity. Hydrolyzes the alpha-chain of fibrinogen (FGA), without affecting the beta- and the gamma-chains. Also displays hydrolytic activity towards S-2302 (plasma kallikrein substrate) and S-2251 (substrate for plasmin), but has no hydrolytic activity with S-2238 (thrombin substrate) or S-2222 (factor Xa). This chain is Snake venom serine protease LmrSP-4, found in Lachesis muta rhombeata (Bushmaster).